Here is a 137-residue protein sequence, read N- to C-terminus: MVGISWQIVLAVIGVVAGFIITDKILNMKGYRGREILRPMELEELCSHLMTKYLVSVAAIAGDKKIVEGVDDYEIDEIRTLMRSMGSEEILLVSGSDYRYAMRGNGIFIYIKGKFVSLEDFAKVWKLVKSSIAGVGV.

The helical transmembrane segment at 4–21 threads the bilayer; that stretch reads ISWQIVLAVIGVVAGFII.

The protein localises to the membrane. This is an uncharacterized protein from Archaeoglobus fulgidus (strain ATCC 49558 / DSM 4304 / JCM 9628 / NBRC 100126 / VC-16).